A 555-amino-acid chain; its full sequence is Membrane protein insertase YidC (555 aa).

A helical transmembrane segment spans residues 7–24; it reads ILWVIFSMSLVLLYDNWQ. 2 stretches are compositionally biased toward low complexity: residues 40 to 54 and 64 to 81; these read QQAA…TPQA and AAPG…QPVG. Residues 40 to 81 are disordered; it reads QQAAPAGAGGATPQADVPKANATNAAPGTVPAAPQAAAQPVG. 5 helical membrane passes run 334 to 354, 360 to 380, 430 to 450, 468 to 488, and 503 to 523; these read LELV…FWLL, FLGN…LVFF, LGGC…YWVL, LSVP…MFVQ, and VMMI…AGLV.

The protein belongs to the OXA1/ALB3/YidC family. Type 1 subfamily. Interacts with the Sec translocase complex via SecD. Specifically interacts with transmembrane segments of nascent integral membrane proteins during membrane integration.

It localises to the cell inner membrane. Required for the insertion and/or proper folding and/or complex formation of integral membrane proteins into the membrane. Involved in integration of membrane proteins that insert both dependently and independently of the Sec translocase complex, as well as at least some lipoproteins. Aids folding of multispanning membrane proteins. In Cupriavidus metallidurans (strain ATCC 43123 / DSM 2839 / NBRC 102507 / CH34) (Ralstonia metallidurans), this protein is Membrane protein insertase YidC.